Consider the following 305-residue polypeptide: UDP-3-O-acyl-N-acetylglucosamine deacetylase (305 aa).

Zn(2+) is bound by residues histidine 78, histidine 237, and aspartate 241. Histidine 264 acts as the Proton donor in catalysis.

This sequence belongs to the LpxC family. Zn(2+) is required as a cofactor.

It catalyses the reaction a UDP-3-O-[(3R)-3-hydroxyacyl]-N-acetyl-alpha-D-glucosamine + H2O = a UDP-3-O-[(3R)-3-hydroxyacyl]-alpha-D-glucosamine + acetate. The protein operates within glycolipid biosynthesis; lipid IV(A) biosynthesis; lipid IV(A) from (3R)-3-hydroxytetradecanoyl-[acyl-carrier-protein] and UDP-N-acetyl-alpha-D-glucosamine: step 2/6. Its function is as follows. Catalyzes the hydrolysis of UDP-3-O-myristoyl-N-acetylglucosamine to form UDP-3-O-myristoylglucosamine and acetate, the committed step in lipid A biosynthesis. This is UDP-3-O-acyl-N-acetylglucosamine deacetylase from Cupriavidus taiwanensis (strain DSM 17343 / BCRC 17206 / CCUG 44338 / CIP 107171 / LMG 19424 / R1) (Ralstonia taiwanensis (strain LMG 19424)).